The following is a 973-amino-acid chain: UvrABC system protein A (973 aa).

An ATP-binding site is contributed by 34-41 (GLSGSGKS). ABC transporter domains are found at residues 331-609 (WAKS…PKSL) and 629-958 (PKKG…HFLK). 662-669 (GVSGGGKS) contacts ATP. The C4-type zinc-finger motif lies at 761 to 787 (CEACQGDGVIKIEMHFLPDVYVTCDVC).

The protein belongs to the ABC transporter superfamily. UvrA family. In terms of assembly, forms a heterotetramer with UvrB during the search for lesions.

It localises to the cytoplasm. In terms of biological role, the UvrABC repair system catalyzes the recognition and processing of DNA lesions. UvrA is an ATPase and a DNA-binding protein. A damage recognition complex composed of 2 UvrA and 2 UvrB subunits scans DNA for abnormalities. When the presence of a lesion has been verified by UvrB, the UvrA molecules dissociate. This is UvrABC system protein A from Agrobacterium fabrum (strain C58 / ATCC 33970) (Agrobacterium tumefaciens (strain C58)).